The primary structure comprises 276 residues: Glucosamine-6-phosphate deaminase 2 (276 aa).

The Proton acceptor; for enolization step role is filled by D72. Positions 106–130 (ILDGNATDLQAECDAFEKKIKEAGG) form a coiled coil. Residue D141 is the For ring-opening step of the active site. The active-site Proton acceptor; for ring-opening step is H143. E148 serves as the catalytic For ring-opening step. Position 161 is a phosphothreonine (T161).

Belongs to the glucosamine/galactosamine-6-phosphate isomerase family. Homohexamer.

It is found in the cytoplasm. The enzyme catalyses alpha-D-glucosamine 6-phosphate + H2O = beta-D-fructose 6-phosphate + NH4(+). It functions in the pathway nucleotide-sugar biosynthesis; UDP-N-acetyl-alpha-D-glucosamine biosynthesis; alpha-D-glucosamine 6-phosphate from D-fructose 6-phosphate: step 1/1. Its activity is regulated as follows. Allosterically activated by N-acetylglucosamine-6-phosphate (GlcNAc6P). Its function is as follows. Catalyzes the reversible conversion of alpha-D-glucosamine 6-phosphate (GlcN-6P) into beta-D-fructose 6-phosphate (Fru-6P) and ammonium ion, a regulatory reaction step in de novo uridine diphosphate-N-acetyl-alpha-D-glucosamine (UDP-GlcNAc) biosynthesis via hexosamine pathway. Deamination is coupled to aldo-keto isomerization mediating the metabolic flux from UDP-GlcNAc toward Fru-6P. At high ammonium level can drive amination and isomerization of Fru-6P toward hexosamines and UDP-GlcNAc synthesis. Has a role in fine tuning the metabolic fluctuations of cytosolic UDP-GlcNAc and their effects on hyaluronan synthesis that occur during tissue remodeling. The sequence is that of Glucosamine-6-phosphate deaminase 2 from Bos taurus (Bovine).